Reading from the N-terminus, the 350-residue chain is Nicotinate-nucleotide--dimethylbenzimidazole phosphoribosyltransferase (350 aa).

Glu318 serves as the catalytic Proton acceptor.

Belongs to the CobT family.

It carries out the reaction 5,6-dimethylbenzimidazole + nicotinate beta-D-ribonucleotide = alpha-ribazole 5'-phosphate + nicotinate + H(+). It functions in the pathway nucleoside biosynthesis; alpha-ribazole biosynthesis; alpha-ribazole from 5,6-dimethylbenzimidazole: step 1/2. Functionally, catalyzes the synthesis of alpha-ribazole-5'-phosphate from nicotinate mononucleotide (NAMN) and 5,6-dimethylbenzimidazole (DMB). The chain is Nicotinate-nucleotide--dimethylbenzimidazole phosphoribosyltransferase from Citrifermentans bemidjiense (strain ATCC BAA-1014 / DSM 16622 / JCM 12645 / Bem) (Geobacter bemidjiensis).